The following is a 370-amino-acid chain: Acyl-CoA:lysophosphatidylglycerol acyltransferase 1 (370 aa).

Residues Phe-22 to Ile-42 form a helical membrane-spanning segment. The short motif at His-101–Asp-106 is the HXXXXD motif element. Residues Leu-342–Ile-362 traverse the membrane as a helical segment.

This sequence belongs to the 1-acyl-sn-glycerol-3-phosphate acyltransferase family. As to expression, highly expressed in liver and placenta. Also expressed in peripheral blood, lung, kidney and brain. Detected at lower levels in colon. High expression is detected in brain and testis.

It is found in the endoplasmic reticulum membrane. It carries out the reaction a 2-acyl-sn-glycero-3-phosphoethanolamine + octadecanoyl-CoA = 1-octadecanoyl-2-acyl-sn-glycero-3-phosphoethanolamine + CoA. The enzyme catalyses 2-(9Z-octadecenoyl)-sn-glycero-3-phosphoethanolamine + octadecanoyl-CoA = 1-octadecanoyl-2-(9Z-octadecenoyl)-sn-glycero-3-phosphoethanolamine + CoA. The catalysed reaction is a 2-acyl-sn-glycero-3-phosphoethanolamine + hexadecanoyl-CoA = 1-hexadecanoyl-2-acyl-sn-glycero-3-phosphoethanolamine + CoA. It catalyses the reaction 2-(9Z-octadecenoyl)-sn-glycero-3-phosphoethanolamine + hexadecanoyl-CoA = 1-hexadecanoyl-2-(9Z-octadecenoyl)-sn-glycero-3-phosphoethanolamine + CoA. It carries out the reaction 1-tetradecanoyl-sn-glycero-3-phospho-(1'-sn-glycerol) + hexadecanoyl-CoA = 1-tetradecanoyl-2-hexadecanoyl-sn-glycero-3-phospho-(1'-sn-glycerol) + CoA. The enzyme catalyses 1-hexadecanoyl-sn-glycero-3-phospho-(1'-sn-glycerol) + dodecanoyl-CoA = 1-hexadecanoyl-2-dodecanoyl-sn-glycero-3-phospho-(1'-sn-glycerol) + CoA. The catalysed reaction is 1-hexadecanoyl-sn-glycero-3-phospho-(1'-sn-glycerol) + hexadecanoyl-CoA = 1,2-dihexadecanoyl-sn-glycero-3-phospho-(1'-sn-glycerol) + CoA. It catalyses the reaction 1-hexadecanoyl-sn-glycero-3-phospho-(1'-sn-glycerol) + octadecanoyl-CoA = 1-hexadecanoyl-2-octadecanoyl-sn-glycero-3-phospho-(1'-sn-glycerol) + CoA. It carries out the reaction 1-octadecanoyl-sn-glycero-3-phospho-(1'-sn-glycerol) + hexadecanoyl-CoA = 1-octadecanoyl-2-hexadecanoyl-sn-glycero-3-phospho-(1'-sn-glycerol) + CoA. The enzyme catalyses 1-(9Z-octadecenoyl)-sn-glycero-3-phospho-(1'-sn-glycerol) + dodecanoyl-CoA = 1-(9Z-octadecenoyl)-2-dodecanoyl-sn-glycero-3-phospho-(1'-sn-glycerol) + CoA. The catalysed reaction is 1-hexadecanoyl-sn-glycero-3-phospho-(1'-sn-glycerol) + (9Z)-octadecenoyl-CoA = 1-hexadecanoyl-2-(9Z-octadecenoyl)-sn-glycero-3-phospho-(1'-sn-glycerol) + CoA. It catalyses the reaction 1-(9Z-octadecenoyl)-sn-glycero-3-phospho-(1'-sn-glycerol) + hexadecanoyl-CoA = 1-(9Z-octadecenoyl)-2-hexadecanoyl-sn-glycero-3-phospho-(1'-sn-glycerol) + CoA. It carries out the reaction 1-(9Z-octadecenoyl)-sn-glycero-3-phospho-(1'-sn-glycerol) + (9Z)-octadecenoyl-CoA = 1,2-di-(9Z-octadecenoyl)-sn-glycero-3-phospho-(1'-sn-glycerol) + CoA. The enzyme catalyses a 2-acylglycerol + an acyl-CoA = a 1,2-diacylglycerol + CoA. The catalysed reaction is a 2-acylglycerol + hexadecanoyl-CoA = a 1-hexadecanoyl-2-acylglycerol + CoA. It catalyses the reaction a 1-acylglycerol + hexadecanoyl-CoA = an hexadecanoyl-acylglycerol + CoA. It carries out the reaction a 2-acyl-sn-glycero-3-phosphocholine + an acyl-CoA = a 1,2-diacyl-sn-glycero-3-phosphocholine + CoA. The enzyme catalyses 2-(9Z-octadecenoyl)-sn-glycero-3-phosphocholine + octadecanoyl-CoA = 1-octadecanoyl-2-(9Z-octadecenoyl)-sn-glycero-3-phosphocholine + CoA. The catalysed reaction is 2-(9Z,12Z-octadecadienoyl)-sn-glycero-3-phosphocholine + octadecanoyl-CoA = 1-octadecanoyl-2-(9Z,12Z)-octadecadienoyl-sn-glycero-3-phosphocholine + CoA. It catalyses the reaction 2-(5Z,8Z,11Z,14Z)-eicosatetraenoyl-sn-glycero-3-phosphocholine + octadecanoyl-CoA = 1-octadecanoyl-2-(5Z,8Z,11Z,14Z-eicosatetraenoyl)-sn-glycero-3-phosphocholine + CoA. It carries out the reaction 2-(9Z-octadecenoyl)-sn-glycero-3-phosphocholine + hexadecanoyl-CoA = 1-hexadecanoyl-2-(9Z-octadecenoyl)-sn-glycero-3-phosphocholine + CoA. The enzyme catalyses 2-(9Z-octadecenoyl)-sn-glycero-3-phospho-L-serine + hexadecanoyl-CoA = 1-hexadecanoyl-2-(9Z-octadecenoyl)-sn-glycero-3-phospho-L-serine + CoA. The catalysed reaction is 2-(4Z,7Z,10Z,13Z,16Z,19Z-docosahexaenoyl)-sn-glycero-3-phosphocholine + octadecanoyl-CoA = 1-octadecanoyl-2-(4Z,7Z,10Z,13Z,16Z,19Z-docosahexaenoyl)-sn-glycero-3-phosphocholine + CoA. It catalyses the reaction 1-(9Z-octadecenoyl)-sn-glycero-3-phospho-L-serine + octadecanoyl-CoA = 1-(9Z-octadecenoyl)-2-octadecanoyl-sn-glycero-3-phospho-L-serine + CoA. It carries out the reaction a 2-acyl-sn-glycero-3-phosphoethanolamine + a fatty acyl-CoA = a 1,2-diacyl-sn-glycero-3-phosphoethanolamine + CoA. In terms of biological role, lysophospholipid acyltransferase involved in fatty acyl chain remodeling of glycerophospholipids in the endoplasmic reticulum membrane. Selectively catalyzes the transfer and esterification of saturated long-chain fatty acids from acyl-CoA to the sn-1 position of 1-lyso-2-acyl phosphatidylethanolamines (1-lyso-PE, LPE), with a preference for stearoyl CoA over palmitoyl CoA as acyl donor. Acts in concert with an unknown phospholipase A1 to convert palmitate phosphatidylethanolamine (PE) species into stearate ones. Provides substrates to the PE methylation pathway, controlling stearate/palmitate composition of PE and phosphatidylcholine (PC) species with an overall impact on de novo hepatic lipid synthesis, body fat content and life span. Can acylate lysophosphatidylglycerols (LPG) using various saturated fatty acyl-CoAs as acyl donors. Can also acylate monoacylglycerols with a preference for 2-monoacylglycerols over 1-monoacylglycerols. Has no activity toward lysophosphatidic acids (LPA). This Homo sapiens (Human) protein is Acyl-CoA:lysophosphatidylglycerol acyltransferase 1.